A 271-amino-acid chain; its full sequence is Interleukin-1 alpha (271 aa).

Residues 1 to 112 (MAKVPDMFED…DSEEEIIKPR (112 aa)) constitute a propeptide that is removed on maturation. At lysine 82 the chain carries N6-acetyllysine. Residues lysine 82 and lysine 83 are each lipidated (N6-myristoyl lysine). The tract at residues 82 to 86 (KKRRL) is nuclear localization signal (NLS). The residue at position 87 (serine 87) is a Phosphoserine. Residues asparagine 102 and asparagine 141 are each glycosylated (N-linked (GlcNAc...) asparagine).

This sequence belongs to the IL-1 family. Monomer. Interacts with TMED10; the interaction mediates the translocation from the cytoplasm into the ERGIC (endoplasmic reticulum-Golgi intermediate compartment) and thereby secretion. Interacts with IL1R1. Interacts with S100A13; this interaction is the first step in the export of IL1A, followed by direct translocation of this complex across the plasma membrane. Acetylated within its nuclear localization sequence, which impacts subcellular localization. In terms of processing, proteolytic processed by CAPN1 in a calcium-dependent manner. Cleavage from 31 kDa precursor to 18 kDa biologically active molecules. Post-translationally, phosphorylated. Phosphorylation greatly enhances susceptibility to digestion and promotes the conversion of pre-IL1A alpha to the biologically active IL1A.

Its subcellular location is the nucleus. It is found in the cytoplasm. It localises to the secreted. In terms of biological role, cytokine constitutively present intracellularly in nearly all resting non-hematopoietic cells that plays an important role in inflammation and bridges the innate and adaptive immune systems. After binding to its receptor IL1R1 together with its accessory protein IL1RAP, forms the high affinity interleukin-1 receptor complex. Signaling involves the recruitment of adapter molecules such as MYD88, IRAK1 or IRAK4. In turn, mediates the activation of NF-kappa-B and the three MAPK pathways p38, p42/p44 and JNK pathways. Within the cell, acts as an alarmin and cell death results in its liberation in the extracellular space after disruption of the cell membrane to induce inflammation and alert the host to injury or damage. In addition to its role as a danger signal, which occurs when the cytokine is passively released by cell necrosis, directly senses DNA damage and acts as a signal for genotoxic stress without loss of cell integrity. In Homo sapiens (Human), this protein is Interleukin-1 alpha (IL1A).